Consider the following 186-residue polypeptide: ATP synthase subunit delta (186 aa).

This sequence belongs to the ATPase delta chain family. As to quaternary structure, F-type ATPases have 2 components, F(1) - the catalytic core - and F(0) - the membrane proton channel. F(1) has five subunits: alpha(3), beta(3), gamma(1), delta(1), epsilon(1). F(0) has three main subunits: a(1), b(2) and c(10-14). The alpha and beta chains form an alternating ring which encloses part of the gamma chain. F(1) is attached to F(0) by a central stalk formed by the gamma and epsilon chains, while a peripheral stalk is formed by the delta and b chains.

Its subcellular location is the cell inner membrane. In terms of biological role, f(1)F(0) ATP synthase produces ATP from ADP in the presence of a proton or sodium gradient. F-type ATPases consist of two structural domains, F(1) containing the extramembraneous catalytic core and F(0) containing the membrane proton channel, linked together by a central stalk and a peripheral stalk. During catalysis, ATP synthesis in the catalytic domain of F(1) is coupled via a rotary mechanism of the central stalk subunits to proton translocation. Functionally, this protein is part of the stalk that links CF(0) to CF(1). It either transmits conformational changes from CF(0) to CF(1) or is implicated in proton conduction. In Nitrobacter hamburgensis (strain DSM 10229 / NCIMB 13809 / X14), this protein is ATP synthase subunit delta.